Consider the following 493-residue polypeptide: Galactose-1-phosphate uridylyltransferase 2 (493 aa).

The protein belongs to the galactose-1-phosphate uridylyltransferase type 2 family.

The protein resides in the cytoplasm. It carries out the reaction alpha-D-galactose 1-phosphate + UDP-alpha-D-glucose = alpha-D-glucose 1-phosphate + UDP-alpha-D-galactose. It participates in carbohydrate metabolism; galactose metabolism. In Streptococcus pneumoniae (strain ATCC BAA-255 / R6), this protein is Galactose-1-phosphate uridylyltransferase 2 (galT2).